We begin with the raw amino-acid sequence, 216 residues long: MKLAASLNRLSPKRLFRTKSKASVSRSEPSSFSSNASSSSSDGSYGNLKQGPTATPISVLPQNSGDFYTELVQAFKLIDRDDDGVVSRGDLAALISRLSHEPPSQEEVSLMLREVDGGDGGCISLEDLASRVAGTSGEGSVETEELREVFEIFDVDRNGKISAEELHRVFGVIGDERCTLEECMRMIATVDGNGDGFVCFDDFCRMMVPAMNDHHH.

The segment at Thr18–Ser58 is disordered. Low complexity predominate over residues Ser23 to Ser44. EF-hand domains are found at residues Asp66–Glu101, Pro103–Glu138, Val141–Glu176, and Cys178–Asp213. The Ca(2+) site is built by Asp79, Asp81, Asp83, and Asp90. Residues Asp154, Asp156, Asn158, Lys160, Glu165, Asp191, Asn193, Asp195, and Asp202 each contribute to the Ca(2+) site.

In terms of biological role, potential calcium sensor. The chain is Probable calcium-binding protein CML35 (CML35) from Arabidopsis thaliana (Mouse-ear cress).